Here is a 380-residue protein sequence, read N- to C-terminus: MAPNLRKSHPLLKMVNNSLIDLPTPSNISAWWNFGSLLGICLMTQILTGLLLAMHYTADTTLAFSSVAHTCRNVQYGWLIRNLHANGASFFFICIYLHIGRGFYYGSYLYKETWNTGIILLLTLMATAFVGYVLPWGQMSFWGATVITNLFSAIPYIGQTLVEWAWGGFSVDNPTLTRFFALHFLLPFAIAGLTLIHLTFLHESGSNNPLGIVSNCDKIPFHPYFTLKDILGFTLMFLPLTSLALFSPNLLGDPENFTPANPLVTPPHIKPEWYFLFAYAILRSIPNKLGGVLALAASVLVLFLSPFLHKAKQRTMTFRPLSQLLFWILVTNLFILTWVGSQPVEHPFIIIGQLASVTYFTILLILFPAIGALENKMLNF.

The next 4 membrane-spanning stretches (helical) occupy residues 34–54, 78–99, 114–134, and 179–199; these read FGSLLGICLMTQILTGLLLAM, WLIRNLHANGASFFFICIYLHI, WNTGIILLLTLMATAFVGYVL, and FFALHFLLPFAIAGLTLIHLT. Histidine 84 and histidine 98 together coordinate heme b. 2 residues coordinate heme b: histidine 183 and histidine 197. Histidine 202 is an a ubiquinone binding site. The next 4 helical transmembrane spans lie at 227–247, 289–309, 321–341, and 348–368; these read LKDILGFTLMFLPLTSLALFS, LGGVLALAASVLVLFLSPFLH, LSQLLFWILVTNLFILTWVGS, and FIIIGQLASVTYFTILLILFP.

This sequence belongs to the cytochrome b family. In terms of assembly, the cytochrome bc1 complex contains 11 subunits: 3 respiratory subunits (MT-CYB, CYC1 and UQCRFS1), 2 core proteins (UQCRC1 and UQCRC2) and 6 low-molecular weight proteins (UQCRH/QCR6, UQCRB/QCR7, UQCRQ/QCR8, UQCR10/QCR9, UQCR11/QCR10 and a cleavage product of UQCRFS1). This cytochrome bc1 complex then forms a dimer. The cofactor is heme b.

The protein resides in the mitochondrion inner membrane. Component of the ubiquinol-cytochrome c reductase complex (complex III or cytochrome b-c1 complex) that is part of the mitochondrial respiratory chain. The b-c1 complex mediates electron transfer from ubiquinol to cytochrome c. Contributes to the generation of a proton gradient across the mitochondrial membrane that is then used for ATP synthesis. The chain is Cytochrome b (MT-CYB) from Thalassoica antarctica (Antarctic petrel).